A 467-amino-acid polypeptide reads, in one-letter code: Uronate isomerase (467 aa).

It belongs to the metallo-dependent hydrolases superfamily. Uronate isomerase family.

It catalyses the reaction D-glucuronate = D-fructuronate. The catalysed reaction is aldehydo-D-galacturonate = keto-D-tagaturonate. It participates in carbohydrate metabolism; pentose and glucuronate interconversion. The chain is Uronate isomerase from Histophilus somni (strain 2336) (Haemophilus somnus).